The following is a 193-amino-acid chain: NADH-quinone oxidoreductase subunit B (193 aa).

Cys-72, Cys-73, Cys-137, and Cys-167 together coordinate [4Fe-4S] cluster.

This sequence belongs to the complex I 20 kDa subunit family. As to quaternary structure, NDH-1 is composed of 14 different subunits. Subunits NuoB, C, D, E, F, and G constitute the peripheral sector of the complex. [4Fe-4S] cluster is required as a cofactor.

It localises to the cell inner membrane. It catalyses the reaction a quinone + NADH + 5 H(+)(in) = a quinol + NAD(+) + 4 H(+)(out). Functionally, NDH-1 shuttles electrons from NADH, via FMN and iron-sulfur (Fe-S) centers, to quinones in the respiratory chain. The immediate electron acceptor for the enzyme in this species is believed to be ubiquinone. Couples the redox reaction to proton translocation (for every two electrons transferred, four hydrogen ions are translocated across the cytoplasmic membrane), and thus conserves the redox energy in a proton gradient. The protein is NADH-quinone oxidoreductase subunit B of Bartonella bacilliformis (strain ATCC 35685 / KC583 / Herrer 020/F12,63).